The following is a 146-amino-acid chain: Universal stress protein MTH_1154 (146 aa).

Belongs to the universal stress protein A family.

This is Universal stress protein MTH_1154 from Methanothermobacter thermautotrophicus (strain ATCC 29096 / DSM 1053 / JCM 10044 / NBRC 100330 / Delta H) (Methanobacterium thermoautotrophicum).